We begin with the raw amino-acid sequence, 398 residues long: Isopenicillin N epimerase (398 aa).

Lys217 is subject to N6-(pyridoxal phosphate)lysine.

Belongs to the class-V pyridoxal-phosphate-dependent aminotransferase family. Pyridoxal 5'-phosphate is required as a cofactor.

It catalyses the reaction isopenicillin N = penicillin N. The protein operates within antibiotic biosynthesis; cephalosporin C biosynthesis. Functionally, catalyzes the reversible isomerization between isopenicillin N and penicillin N. In Streptomyces clavuligerus, this protein is Isopenicillin N epimerase (cefD).